The primary structure comprises 125 residues: Fluoride-specific ion channel FluC (125 aa).

Helical transmembrane passes span 4-24, 36-56, 68-88, and 100-120; these read PLLA…LLAV, GTLL…AWFA, LITT…LEVV, and VISV…GFWL. Positions 75 and 78 each coordinate Na(+).

Belongs to the fluoride channel Fluc/FEX (TC 1.A.43) family.

It localises to the cell inner membrane. The catalysed reaction is fluoride(in) = fluoride(out). Na(+) is not transported, but it plays an essential structural role and its presence is essential for fluoride channel function. Functionally, fluoride-specific ion channel. Important for reducing fluoride concentration in the cell, thus reducing its toxicity. The protein is Fluoride-specific ion channel FluC of Erwinia tasmaniensis (strain DSM 17950 / CFBP 7177 / CIP 109463 / NCPPB 4357 / Et1/99).